A 125-amino-acid polypeptide reads, in one-letter code: uncharacterized protein (125 aa).

It is found in the plastid. The protein resides in the chloroplast. This is an uncharacterized protein from Guillardia theta (Cryptophyte).